The sequence spans 233 residues: CDP-diacylglycerol--glycerol-3-phosphate 3-phosphatidyltransferase 2 (233 aa).

The disordered stretch occupies residues 1 to 23 (MGEEDTATVDQNSFGGGKDSLLR). Transmembrane regions (helical) follow at residues 40-60 (VITL…ILVA), 71-91 (TATT…GYIA), 100-120 (FGAF…LILL), 125-145 (MVAV…IAII), and 201-221 (LPSG…SLVV).

The protein belongs to the CDP-alcohol phosphatidyltransferase class-I family. Mn(2+) is required as a cofactor.

It is found in the microsome membrane. The protein resides in the endoplasmic reticulum membrane. It carries out the reaction a CDP-1,2-diacyl-sn-glycerol + sn-glycerol 3-phosphate = a 1,2-diacyl-sn-glycero-3-phospho-(1'-sn-glycero-3'-phosphate) + CMP + H(+). It functions in the pathway phospholipid metabolism; phosphatidylglycerol biosynthesis; phosphatidylglycerol from CDP-diacylglycerol: step 1/2. Functionally, catalyzes the committed step to the synthesis of the acidic phospholipids, including phosphatidylglycerol (PG). Together with PGPS1, required for the proper embryo development by providing PG accurate levels. In Arabidopsis thaliana (Mouse-ear cress), this protein is CDP-diacylglycerol--glycerol-3-phosphate 3-phosphatidyltransferase 2.